The primary structure comprises 276 residues: uncharacterized protein (276 aa).

The 118-residue stretch at 20–137 (PVLIFIPGAN…PPINTFLPDS (118 aa)) folds into the AB hydrolase-1 domain.

This sequence belongs to the AB hydrolase superfamily.

This is an uncharacterized protein from Staphylococcus aureus (strain MRSA252).